Here is a 530-residue protein sequence, read N- to C-terminus: MRELFMYLFLLFLVLCVKSVYSTPTREQFQNCLSTKQFNSTLKNPINLTTHTLDSRVHTDFSESSSPNSSFLNLNFTSLKPILIVKPKSESEIKQSILCSRKLGVQVRTMSGGHDYEGLSYLSLSPFIIVDLVNLRSISINLTDETAWIQSGATLGEVYYKIAKTSKIHAFAAGICPSVGVGGHISGGGFGTIMRKYGLASDNVVDARLMDVNGKTLDRKTMGEDLFWALRGGGAASFGVVLSWKVKLARVPEKVTCFISQHPMGPSMNKLVHRWQSIGSELDEDLFIRVIIDNSLEGNQRKVKSTFQTLFLGGIDRLIPLMNQKFPELGLRSQDCSEMSWIESIMFFNWRSGQPLEILLNRDLRFEDQYFKAKSDYVQKPVPENVFEEVTKRFLEQDTPLMIFEPLGGKISKISETESPYPHRRGNLYNIQYMVKWKVNEVEEMNKHVRWMRSLHDYMTPYVSKSPRGAYLNYRDLDLGSTKGINTSFEDARKWGETYFKGNFKRLGLVKGKIDPTNFFRNEQSIPPLF.

Residues 1–22 (MRELFMYLFLLFLVLCVKSVYS) form the signal peptide. Residues Cys32 and Cys99 are joined by a disulfide bond. Asn39, Asn47, Asn68, Asn75, Asn141, and Asn486 each carry an N-linked (GlcNAc...) asparagine glycan. The region spanning 77 to 251 (TSLKPILIVK…LSWKVKLARV (175 aa)) is the FAD-binding PCMH-type domain. A cross-link (6-(S-cysteinyl)-8alpha-(pros-histidyl)-FAD (His-Cys)) is located at residues 114-176 (HDYEGLSYLS…KIHAFAAGIC (63 aa)).

The protein belongs to the oxygen-dependent FAD-linked oxidoreductase family. Requires FAD as cofactor. Post-translationally, the FAD cofactor is bound via a bicovalent 6-S-cysteinyl, 8alpha-N1-histidyl FAD linkage. As to expression, accumulates in cell walls of etiolated hypocotyls.

The protein resides in the secreted. Its subcellular location is the cell wall. The chain is Berberine bridge enzyme-like 22 from Arabidopsis thaliana (Mouse-ear cress).